Here is a 204-residue protein sequence, read N- to C-terminus: Signal peptidase I (204 aa).

Topologically, residues 1-10 (MNLFKNFLKE) are cytoplasmic. A helical membrane pass occupies residues 11–30 (WGLFLLILSLLALSRIFFWS). At 31 to 204 (NVRVEGHSMD…FWPITRIGTF (174 aa)) the chain is on the extracellular side. Active-site residues include Ser38 and Lys76.

The protein belongs to the peptidase S26 family.

The protein localises to the cell membrane. The enzyme catalyses Cleavage of hydrophobic, N-terminal signal or leader sequences from secreted and periplasmic proteins.. This is Signal peptidase I (lepB) from Streptococcus pneumoniae (strain ATCC BAA-255 / R6).